An 80-amino-acid polypeptide reads, in one-letter code: Conotoxin Bu3 (80 aa).

Positions M1–A22 are cleaved as a signal peptide. The propeptide occupies D23–R51. 3 cysteine pairs are disulfide-bonded: C53-C69, C60-C72, and C68-C79.

This sequence belongs to the conotoxin O1 superfamily. In terms of tissue distribution, expressed by the venom duct.

It localises to the secreted. This chain is Conotoxin Bu3, found in Conus bullatus (Bubble cone).